Reading from the N-terminus, the 249-residue chain is Cytokine-inducible SH2-containing protein (249 aa).

The disordered stretch occupies residues 41 to 64; that stretch reads AFPEEPAPTFAAPEPDGSAPQTRD. Residues 84-165 form the SH2 domain; the sequence is WYWGSITASE…PDVVSLIQHY (82 aa). An SOCS box domain is found at 200 to 248; it reads KLLRPLGRRDSIPSLQHLCRLRINRCTTEVERLPLPRRMGDYLKQYPFQ.

It functions in the pathway protein modification; protein ubiquitination. Functionally, SOCS family proteins form part of a classical negative feedback system that regulates cytokine signal transduction. CIS is involved in the negative regulation of cytokines that signal through the JAK-STAT5 pathway such as erythropoietin, prolactin and interleukin 3 (IL3) receptor. Inhibits STAT5 trans-activation by suppressing its tyrosine phosphorylation. May be a substrate-recognition component of a SCF-like ECS (Elongin BC-CUL2/5-SOCS-box protein) E3 ubiquitin-protein ligase complex which mediates the ubiquitination and subsequent proteasomal degradation of target proteins. In Gallus gallus (Chicken), this protein is Cytokine-inducible SH2-containing protein (CISH).